We begin with the raw amino-acid sequence, 1461 residues long: Calmodulin-regulated spectrin-associated protein 2 (1461 aa).

One can recognise a Calponin-homology (CH) domain in the interval 211 to 324 (PGGQKARYRK…FMAELFWWFE (114 aa)). Residues 361 to 389 (RDSSSSSDFSSRYTRPQTHSSASGGIRRS) are disordered. Low complexity-rich tracts occupy residues 362–371 (DSSSSSDFSS) and 380–389 (SSASGGIRRS). Phosphoserine occurs at positions 391 and 393. Thr401 is subject to Phosphothreonine. Residues Ser439, Ser572, Ser573, Ser585, and Ser647 each carry the phosphoserine modification. Disordered regions lie at residues 573-613 (SPDN…EDSS) and 639-704 (ASNP…GSEL). A Phosphothreonine modification is found at Thr652. Ser654 is subject to Phosphoserine. The span at 654 to 673 (STKSQPGSSASSSSGVKMTS) shows a compositional bias: low complexity. Over residues 677–687 (QKFRKLNHTDG) the composition is skewed to basic and acidic residues. Positions 730–767 (LLASEMVHLRMRLEEKRRAIEAQKKKMEAAFTKQRQKM) form a coiled coil. Over residues 787 to 826 (REEAAGAEDEKVYTDRAKERESQKMDGQRSKSLADIKESM) the composition is skewed to basic and acidic residues. Residues 787–855 (REEAAGAEDE…QWNLTSPSEE (69 aa)) form a disordered region. Phosphoserine is present on Ser836. Residues 861–900 (EILEYTKSIEKLNSSLHFLQQEMQRLSLQQEMLMQMREQQ) are a coiled coil. The segment at 896-1007 (MREQQAWVIS…IQTRSFVCFG (112 aa)) is MBD region. Phosphoserine occurs at positions 905 and 910. Disordered regions lie at residues 921–992 (RQAG…RRFS), 1004–1044 (VCFG…GEKE), 1069–1090 (NEDQ…PTAP), 1102–1124 (DLKP…DKEQ), and 1163–1321 (KETQ…EYTG). Residues 926–937 (SSAAAPFSSDSP) are compositionally biased toward low complexity. Residues 943–962 (SPQSSTRKSASFSVKNQRTP) are compositionally biased toward polar residues. 3 positions are modified to phosphothreonine: Thr970, Thr975, and Thr977. Residues Ser981 and Ser992 each carry the phosphoserine modification. Over residues 1011–1028 (EPQKEPKQKEEIKKEPSE) the composition is skewed to basic and acidic residues. Positions 1077-1089 (TEPPPKPVFPPTA) are enriched in pro residues. 2 stretches are compositionally biased toward basic and acidic residues: residues 1104 to 1124 (KPPE…DKEQ) and 1163 to 1224 (KETQ…DTVI). At Ser1120 the chain carries Phosphoserine. Residues 1138 to 1210 (KDDQKAENDM…REFIRQEYMR (73 aa)) are a coiled coil. The span at 1259–1271 (SSLSLASLNTGDS) shows a compositional bias: polar residues. Phosphoserine is present on residues Ser1285, Ser1291, and Ser1293. Polar residues predominate over residues 1306-1318 (NASTTSSVASGTE). The 135-residue stretch at 1321–1455 (GPKLYKEPSA…QTKRPVTPKK (135 aa)) folds into the CKK domain.

The protein belongs to the CAMSAP1 family. Interacts with CAMSAP3. Interacts with KATNA1 and KATNB1; leading to regulate the length of CAMSAP2-decorated microtubule stretches. Interacts with a complex formed by AKAP9 and PDE4DIP isoform 2/MMG8/SMYLE, which recruits CAMSAP2 to the Golgi. Interacts with MAPRE1/EB1.

It localises to the cytoplasm. The protein localises to the cytoskeleton. It is found in the golgi apparatus. Its subcellular location is the cilium basal body. Key microtubule-organizing protein that specifically binds the minus-end of non-centrosomal microtubules and regulates their dynamics and organization. Specifically recognizes growing microtubule minus-ends and autonomously decorates and stabilizes microtubule lattice formed by microtubule minus-end polymerization. Acts on free microtubule minus-ends that are not capped by microtubule-nucleating proteins or other factors and protects microtubule minus-ends from depolymerization. In addition, it also reduces the velocity of microtubule polymerization. Through the microtubule cytoskeleton, also regulates the organization of cellular organelles including the Golgi and the early endosomes. Essential for the tethering, but not for nucleation of non-centrosomal microtubules at the Golgi: together with Golgi-associated proteins AKAP9 and PDE4DIP, required to tether non-centrosomal minus-end microtubules to the Golgi, an important step for polarized cell movement. Also acts as a regulator of neuronal polarity and development: localizes to non-centrosomal microtubule minus-ends in neurons and stabilizes non-centrosomal microtubules, which is required for neuronal polarity, axon specification and dendritic branch formation. Through the microtubule cytoskeleton, regulates the autophagosome transport. The sequence is that of Calmodulin-regulated spectrin-associated protein 2 from Mus musculus (Mouse).